The following is a 377-amino-acid chain: Erythronate-4-phosphate dehydrogenase (377 aa).

Substrate contacts are provided by serine 45 and threonine 66. The NAD(+) site is built by aspartate 146 and threonine 175. Residue arginine 208 is part of the active site. NAD(+) is bound at residue aspartate 232. Residue glutamate 237 is part of the active site. Catalysis depends on histidine 254, which acts as the Proton donor. NAD(+) is bound at residue glycine 257. Tyrosine 258 contacts substrate.

It belongs to the D-isomer specific 2-hydroxyacid dehydrogenase family. PdxB subfamily. In terms of assembly, homodimer.

Its subcellular location is the cytoplasm. The catalysed reaction is 4-phospho-D-erythronate + NAD(+) = (R)-3-hydroxy-2-oxo-4-phosphooxybutanoate + NADH + H(+). It participates in cofactor biosynthesis; pyridoxine 5'-phosphate biosynthesis; pyridoxine 5'-phosphate from D-erythrose 4-phosphate: step 2/5. In terms of biological role, catalyzes the oxidation of erythronate-4-phosphate to 3-hydroxy-2-oxo-4-phosphonooxybutanoate. This Sodalis glossinidius (strain morsitans) protein is Erythronate-4-phosphate dehydrogenase.